We begin with the raw amino-acid sequence, 374 residues long: Putative zinc metalloprotease R01501 (374 aa).

Residue His-26 coordinates Zn(2+). Residue Glu-27 is part of the active site. His-30 serves as a coordination point for Zn(2+). The next 4 helical transmembrane spans lie at 36-55 (WSGI…LFGW), 112-134 (AATV…AVLF), 301-323 (VLNF…VPVL), and 348-367 (LAFR…AAWN). The PDZ domain maps to 126–199 (AIAIFAVLFS…LPITVRIERE (74 aa)).

The protein belongs to the peptidase M50B family. Zn(2+) serves as cofactor.

The protein resides in the cell inner membrane. This Rhizobium meliloti (strain 1021) (Ensifer meliloti) protein is Putative zinc metalloprotease R01501.